Reading from the N-terminus, the 476-residue chain is GTPase Der (476 aa).

2 EngA-type G domains span residues 3 to 167 (FTVA…GEDM) and 205 to 380 (LRVA…KTWN). GTP-binding positions include 9-16 (GRPNVGKS), 56-60 (DTAGL), 119-122 (NKSE), 211-218 (GRPNAGKS), 258-262 (DTAGM), and 323-326 (NKWD). In terms of domain architecture, KH-like spans 381–465 (RRISTAKLNR…PIRVHYRGSD (85 aa)).

It belongs to the TRAFAC class TrmE-Era-EngA-EngB-Septin-like GTPase superfamily. EngA (Der) GTPase family. As to quaternary structure, associates with the 50S ribosomal subunit.

Its function is as follows. GTPase that plays an essential role in the late steps of ribosome biogenesis. The chain is GTPase Der from Agrobacterium fabrum (strain C58 / ATCC 33970) (Agrobacterium tumefaciens (strain C58)).